The chain runs to 279 residues: 2-dehydro-3-deoxyphosphooctonate aldolase (279 aa).

Belongs to the KdsA family.

The protein localises to the cytoplasm. It catalyses the reaction D-arabinose 5-phosphate + phosphoenolpyruvate + H2O = 3-deoxy-alpha-D-manno-2-octulosonate-8-phosphate + phosphate. It participates in carbohydrate biosynthesis; 3-deoxy-D-manno-octulosonate biosynthesis; 3-deoxy-D-manno-octulosonate from D-ribulose 5-phosphate: step 2/3. The protein operates within bacterial outer membrane biogenesis; lipopolysaccharide biosynthesis. The sequence is that of 2-dehydro-3-deoxyphosphooctonate aldolase from Aromatoleum aromaticum (strain DSM 19018 / LMG 30748 / EbN1) (Azoarcus sp. (strain EbN1)).